The sequence spans 388 residues: S-adenosylmethionine synthase 1 (388 aa).

Glutamate 11 contributes to the Mg(2+) binding site. Residue histidine 17 participates in ATP binding. Glutamate 45 contacts K(+). Residues glutamate 58 and glutamine 101 each coordinate L-methionine. ATP-binding positions include 168–170 (DAK), 233–236 (SGRF), aspartate 244, 250–251 (RK), alanine 267, lysine 271, and lysine 275. Aspartate 244 is a binding site for L-methionine. Lysine 275 contacts L-methionine.

It belongs to the AdoMet synthase family. In terms of assembly, homotetramer. Mn(2+) serves as cofactor. Mg(2+) is required as a cofactor. It depends on Co(2+) as a cofactor. Requires K(+) as cofactor. As to expression, mostly in Roots.

It is found in the cytoplasm. It carries out the reaction L-methionine + ATP + H2O = S-adenosyl-L-methionine + phosphate + diphosphate. The protein operates within amino-acid biosynthesis; S-adenosyl-L-methionine biosynthesis; S-adenosyl-L-methionine from L-methionine: step 1/1. Its function is as follows. Catalyzes the formation of S-adenosylmethionine from methionine and ATP. The reaction comprises two steps that are both catalyzed by the same enzyme: formation of S-adenosylmethionine (AdoMet) and triphosphate, and subsequent hydrolysis of the triphosphate. This chain is S-adenosylmethionine synthase 1 (SAMS1), found in Pinus contorta (Shore pine).